The chain runs to 257 residues: Zinc finger protein 8 (257 aa).

3 disordered regions span residues 48 to 92 (GDNS…NNNN), 108 to 128 (QALG…KRGS), and 214 to 238 (GVYS…PNNW). Residues 50–65 (NSDNLSAEPSDHQTTT) show a composition bias toward polar residues. The span at 66–92 (KNDESSENIKDKDKEKDKDKDKDNNNN) shows a compositional bias: basic and acidic residues. The segment at 95–117 (FECHYCFRNFPTSQALGGHQNAH) adopts a C2H2-type zinc-finger fold. Positions 115 to 126 (NAHKRERQHAKR) are enriched in basic residues.

As to expression, expressed in developing cauline leaves.

The protein resides in the nucleus. Functionally, probable transcription factor required for the initiation of inflorescence trichomes in response to gibberellin and cytokinin. Is not involved in the regulation of trichome branching. Is functionally equivalent to GIS2. Acts as a negative regulator of abscisic acid (ABA) signaling during germination and early seedling development. This is Zinc finger protein 8 from Arabidopsis thaliana (Mouse-ear cress).